Reading from the N-terminus, the 280-residue chain is 4-diphosphocytidyl-2-C-methyl-D-erythritol kinase (280 aa).

The active site involves K9. Residue P93–S103 coordinates ATP. D135 is a catalytic residue.

It belongs to the GHMP kinase family. IspE subfamily.

The enzyme catalyses 4-CDP-2-C-methyl-D-erythritol + ATP = 4-CDP-2-C-methyl-D-erythritol 2-phosphate + ADP + H(+). It functions in the pathway isoprenoid biosynthesis; isopentenyl diphosphate biosynthesis via DXP pathway; isopentenyl diphosphate from 1-deoxy-D-xylulose 5-phosphate: step 3/6. Functionally, catalyzes the phosphorylation of the position 2 hydroxy group of 4-diphosphocytidyl-2C-methyl-D-erythritol. This chain is 4-diphosphocytidyl-2-C-methyl-D-erythritol kinase, found in Syntrophotalea carbinolica (strain DSM 2380 / NBRC 103641 / GraBd1) (Pelobacter carbinolicus).